A 100-amino-acid polypeptide reads, in one-letter code: Histone H3-like 2 (100 aa).

The tract at residues 1 to 46 (MARMKHTARMSTGGKAPRKQLASKALRKAPPPPTKGVKQPTTTTSG) is disordered.

It belongs to the histone H3 family. The nucleosome is a histone octamer containing two molecules each of H2A, H2B, H3 and H4 assembled in one H3-H4 heterotetramer and two H2A-H2B heterodimers. The octamer wraps approximately 147 bp of DNA. Pollen specific.

It is found in the nucleus. The protein localises to the chromosome. In terms of biological role, core component of nucleosome. Nucleosomes wrap and compact DNA into chromatin, limiting DNA accessibility to the cellular machineries which require DNA as a template. Histones thereby play a central role in transcription regulation, DNA repair, DNA replication and chromosomal stability. DNA accessibility is regulated via a complex set of post-translational modifications of histones, also called histone code, and nucleosome remodeling. This Lilium longiflorum (Trumpet lily) protein is Histone H3-like 2 (gcH3).